The primary structure comprises 226 residues: Probable functional amyloid protease FapD (226 aa).

A signal peptide spans Met-1 to Ala-18. A Peptidase C39 domain is found at Gln-50–Val-180. The active site involves Cys-56.

This sequence belongs to the FapD family.

It is found in the periplasm. Its function is as follows. Probable cysteine protease that is involved in processing fibril precursors. Upon overexpression of the endogenous six-gene locus (fapA-fapF) in situ, cells form large clumps during liquid growth, make large amounts of biofilm and produce amyloid fibrils. Expression of the 6 gene operon in E.coli strain BL21(DE3) induces flocculation and biofilm formation with copious extracellular fibrils. In Pseudomonas fluorescens, this protein is Probable functional amyloid protease FapD.